The chain runs to 255 residues: Acetylglutamate kinase (255 aa).

Substrate contacts are provided by residues 40–41 (GG), Arg-62, and Asn-153.

The protein belongs to the acetylglutamate kinase family. ArgB subfamily.

It is found in the cytoplasm. It catalyses the reaction N-acetyl-L-glutamate + ATP = N-acetyl-L-glutamyl 5-phosphate + ADP. Its pathway is amino-acid biosynthesis; L-arginine biosynthesis; N(2)-acetyl-L-ornithine from L-glutamate: step 2/4. Catalyzes the ATP-dependent phosphorylation of N-acetyl-L-glutamate. The chain is Acetylglutamate kinase from Bacillus anthracis (strain A0248).